The following is a 352-amino-acid chain: Rhodopsin, freshwater form (352 aa).

Residues 1-36 (MNGTEGPNFYVPMSNVTGVVRSPFEYPQYYLAEPWA) lie on the Extracellular side of the membrane. Residues Asn-2 and Asn-15 are each glycosylated (N-linked (GlcNAc...) asparagine). Residues 37-61 (YSALAAYMFFLIIAGFPINFLTLYV) form a helical membrane-spanning segment. The Cytoplasmic segment spans residues 62–73 (TIEHKKLRTPLN). Residues 74–98 (YILLNLAVADLFMVFGGFTTTMYTS) traverse the membrane as a helical segment. Over 99–113 (MHGYFVFGPTGCNIE) the chain is Extracellular. Residues Cys-110 and Cys-187 are joined by a disulfide bond. A helical transmembrane segment spans residues 114–133 (GFFATLGGEIALWCLVVLAV). Residues 134–152 (ERWMVVCKPMSNFRFGENH) are Cytoplasmic-facing. A helical membrane pass occupies residues 153 to 176 (AIMGVAFTWVMALACAAPPLFGWS). At 177–202 (RYIPEGMQCSCGMDHYAPNPETYNES) the chain is on the extracellular side. Asn-200 is a glycosylation site (N-linked (GlcNAc...) asparagine). The chain crosses the membrane as a helical span at residues 203–230 (FVIYMFICHFTIPLTVISFCYGRLVCTV). Residues 231-252 (KEATAQQQESETTQRAEREVTR) lie on the Cytoplasmic side of the membrane. A helical membrane pass occupies residues 253–276 (MVIIMVISFLVCWVPYASVAWYIF). Over 277 to 284 (THQGSSFG) the chain is Extracellular. A helical transmembrane segment spans residues 285–309 (PIFMTIPAFFAKSSSLYNPLIYICM). Lys-296 is modified (N6-(retinylidene)lysine). At 310 to 352 (NKQSRNCMITTLCCGKNPFEEEEGASTTASKTEASSVSSVSPA) the chain is on the cytoplasmic side. Residue Cys-323 is the site of S-palmitoyl cysteine attachment. The tract at residues 330-352 (EEEGASTTASKTEASSVSSVSPA) is disordered. Residues 334 to 352 (ASTTASKTEASSVSSVSPA) show a composition bias toward low complexity.

Belongs to the G-protein coupled receptor 1 family. Opsin subfamily. Post-translationally, phosphorylated on some or all of the serine and threonine residues present in the C-terminal region. Rod shaped photoreceptor cells which mediates vision in dim light.

It localises to the membrane. Functionally, visual pigments such as rhodopsin and porphyropsin are light-absorbing molecules that mediate vision. Rhodopsin consists of an apoprotein, opsin, covalently linked to 11-cis-retinal. This receptor is coupled to the activation of phospholipase C. Porphyropsin consists of opsin covalently linked to 11-cis 3,4-didehydroretinal. The chain is Rhodopsin, freshwater form from Anguilla anguilla (European freshwater eel).